The sequence spans 104 residues: Large ribosomal subunit protein uL23 (104 aa).

The protein belongs to the universal ribosomal protein uL23 family. Part of the 50S ribosomal subunit. Contacts protein L29, and trigger factor when it is bound to the ribosome.

In terms of biological role, one of the early assembly proteins it binds 23S rRNA. One of the proteins that surrounds the polypeptide exit tunnel on the outside of the ribosome. Forms the main docking site for trigger factor binding to the ribosome. This chain is Large ribosomal subunit protein uL23, found in Polynucleobacter asymbioticus (strain DSM 18221 / CIP 109841 / QLW-P1DMWA-1) (Polynucleobacter necessarius subsp. asymbioticus).